A 325-amino-acid chain; its full sequence is Zinc-type alcohol dehydrogenase-like protein C337.11 (325 aa).

The protein belongs to the zinc-containing alcohol dehydrogenase family. Quinone oxidoreductase subfamily.

Its subcellular location is the cytoplasm. It is found in the nucleus. The polypeptide is Zinc-type alcohol dehydrogenase-like protein C337.11 (Schizosaccharomyces pombe (strain 972 / ATCC 24843) (Fission yeast)).